We begin with the raw amino-acid sequence, 434 residues long: 3-phosphoshikimate 1-carboxyvinyltransferase (434 aa).

Residues Lys-22, Ser-23, and Arg-27 each contribute to the 3-phosphoshikimate site. Residue Lys-22 coordinates phosphoenolpyruvate. Phosphoenolpyruvate is bound by residues Gly-93 and Arg-121. Residues Ser-168, Ser-169, Gln-170, Ser-199, Asp-320, and Lys-347 each contribute to the 3-phosphoshikimate site. Gln-170 provides a ligand contact to phosphoenolpyruvate. Catalysis depends on Asp-320, which acts as the Proton acceptor. 3 residues coordinate phosphoenolpyruvate: Arg-351, Arg-395, and Lys-420.

This sequence belongs to the EPSP synthase family. In terms of assembly, monomer.

It localises to the cytoplasm. It carries out the reaction 3-phosphoshikimate + phosphoenolpyruvate = 5-O-(1-carboxyvinyl)-3-phosphoshikimate + phosphate. It functions in the pathway metabolic intermediate biosynthesis; chorismate biosynthesis; chorismate from D-erythrose 4-phosphate and phosphoenolpyruvate: step 6/7. In terms of biological role, catalyzes the transfer of the enolpyruvyl moiety of phosphoenolpyruvate (PEP) to the 5-hydroxyl of shikimate-3-phosphate (S3P) to produce enolpyruvyl shikimate-3-phosphate and inorganic phosphate. The sequence is that of 3-phosphoshikimate 1-carboxyvinyltransferase from Cupriavidus necator (strain ATCC 17699 / DSM 428 / KCTC 22496 / NCIMB 10442 / H16 / Stanier 337) (Ralstonia eutropha).